A 707-amino-acid chain; its full sequence is D-(-)-3-hydroxybutyrate oligomer hydrolase (707 aa).

The first 32 residues, 1–32, serve as a signal peptide directing secretion; sequence MASVFKVRSASGHVPVVRTLAAMMAVTVVLTA. Residue serine 321 is the Charge relay system of the active site.

Belongs to the D-(-)-3-hydroxybutyrate oligomer hydrolase family.

The protein resides in the secreted. The enzyme catalyses (3R)-hydroxybutanoate dimer + H2O = 2 (R)-3-hydroxybutanoate + H(+). The protein operates within lipid metabolism; butanoate metabolism. Participates in the degradation of poly-3-hydroxybutyrate (PHB). It works downstream of poly(3-hydroxybutyrate) depolymerase, hydrolyzing D(-)-3-hydroxybutyrate oligomers of various length (3HB-oligomers) into 3HB-monomers. This chain is D-(-)-3-hydroxybutyrate oligomer hydrolase, found in Paraburkholderia xenovorans (strain LB400).